We begin with the raw amino-acid sequence, 173 residues long: Calcineurin subunit B (173 aa).

EF-hand domains lie at 20-55, 59-87, 89-124, and 130-165; these read DEID…AANP, RLMD…FSTK, NKKE…MVGN, and QLQQ…TNVY. Ca(2+) contacts are provided by Asp33, Asp35, Ser37, Glu44, Asp65, Asn67, Ser69, Asp71, Glu76, Asp102, Asp104, Asp106, Tyr108, Glu113, Asp143, Asp145, Asp147, Lys149, and Glu154.

This sequence belongs to the calcineurin regulatory subunit family. Composed of a catalytic subunit (A) and a regulatory subunit (B).

Its function is as follows. Regulatory subunit of calcineurin, a calcium-dependent, calmodulin stimulated protein phosphatase. Confers calcium sensitivity. The chain is Calcineurin subunit B (CNB1) from Yarrowia lipolytica (strain CLIB 122 / E 150) (Yeast).